A 326-amino-acid polypeptide reads, in one-letter code: Biotin synthase (326 aa).

Residues 51-278 enclose the Radical SAM core domain; that stretch reads NEVQRSTLLS…TSYVRLSAGR (228 aa). Residues C66, C70, and C73 each coordinate [4Fe-4S] cluster. [2Fe-2S] cluster is bound by residues C110, C141, C201, and R273.

The protein belongs to the radical SAM superfamily. Biotin synthase family. Homodimer. The cofactor is [4Fe-4S] cluster. Requires [2Fe-2S] cluster as cofactor.

The enzyme catalyses (4R,5S)-dethiobiotin + (sulfur carrier)-SH + 2 reduced [2Fe-2S]-[ferredoxin] + 2 S-adenosyl-L-methionine = (sulfur carrier)-H + biotin + 2 5'-deoxyadenosine + 2 L-methionine + 2 oxidized [2Fe-2S]-[ferredoxin]. It participates in cofactor biosynthesis; biotin biosynthesis; biotin from 7,8-diaminononanoate: step 2/2. Catalyzes the conversion of dethiobiotin (DTB) to biotin by the insertion of a sulfur atom into dethiobiotin via a radical-based mechanism. The polypeptide is Biotin synthase (Azoarcus sp. (strain BH72)).